Reading from the N-terminus, the 177-residue chain is Large ribosomal subunit protein uL6 (177 aa).

Lysine 44 is subject to N6-acetyllysine.

The protein belongs to the universal ribosomal protein uL6 family. Part of the 50S ribosomal subunit.

Functionally, this protein binds to the 23S rRNA, and is important in its secondary structure. It is located near the subunit interface in the base of the L7/L12 stalk, and near the tRNA binding site of the peptidyltransferase center. This Escherichia fergusonii (strain ATCC 35469 / DSM 13698 / CCUG 18766 / IAM 14443 / JCM 21226 / LMG 7866 / NBRC 102419 / NCTC 12128 / CDC 0568-73) protein is Large ribosomal subunit protein uL6.